A 682-amino-acid polypeptide reads, in one-letter code: Potassium-transporting ATPase ATP-binding subunit (682 aa).

Helical transmembrane passes span 34 to 54, 62 to 82, 219 to 239, and 254 to 274; these read PVMF…IAMA, ALFS…ANFA, IALT…TATL, and VLVA…LSAI. Asp307 serves as the catalytic 4-aspartylphosphate intermediate. Residues Asp344, Glu348, 377 to 384, and Lys395 contribute to the ATP site; that span reads FTAQSRMS. 2 residues coordinate Mg(2+): Asp518 and Asp522. 3 helical membrane passes run 588–608, 616–636, and 656–676; these read FAII…LNIM, AILS…PLAL, and IYGL…DLLL.

It belongs to the cation transport ATPase (P-type) (TC 3.A.3) family. Type IA subfamily. As to quaternary structure, the system is composed of three essential subunits: KdpA, KdpB and KdpC.

The protein resides in the cell inner membrane. The catalysed reaction is K(+)(out) + ATP + H2O = K(+)(in) + ADP + phosphate + H(+). In terms of biological role, part of the high-affinity ATP-driven potassium transport (or Kdp) system, which catalyzes the hydrolysis of ATP coupled with the electrogenic transport of potassium into the cytoplasm. This subunit is responsible for energy coupling to the transport system and for the release of the potassium ions to the cytoplasm. The polypeptide is Potassium-transporting ATPase ATP-binding subunit (Escherichia fergusonii (strain ATCC 35469 / DSM 13698 / CCUG 18766 / IAM 14443 / JCM 21226 / LMG 7866 / NBRC 102419 / NCTC 12128 / CDC 0568-73)).